A 361-amino-acid chain; its full sequence is NAD-dependent protein deacetylase hst2-1 (361 aa).

The 261-residue stretch at 16-276 folds into the Deacetylase sirtuin-type domain; sequence SVLEARTVEA…RKLARALGWE (261 aa). Residues 43–63 and 126–129 contribute to the NAD(+) site; these read GAGI…TGIY and QNID. His146 (proton acceptor) is an active-site residue. The Zn(2+) site is built by Cys154, Cys157, Cys178, and Cys181. NAD(+) contacts are provided by residues 217 to 219, 242 to 244, and Cys262; these read GTS and NRE. Residues 294–328 are a coiled coil; it reads EEELATPRTREERLENEISRLTAEIDKTLKISDAY. Positions 335–361 are disordered; it reads RLEGEPLSSPESNGTGLAHVFPHLARR.

It belongs to the sirtuin family. Class I subfamily. Requires Zn(2+) as cofactor.

It localises to the cytoplasm. Its subcellular location is the nucleus. The catalysed reaction is N(6)-acetyl-L-lysyl-[protein] + NAD(+) + H2O = 2''-O-acetyl-ADP-D-ribose + nicotinamide + L-lysyl-[protein]. NAD-dependent histone deacetylase, which could function in telomeric silencing, cell cycle progression and chromosome stability. The polypeptide is NAD-dependent protein deacetylase hst2-1 (Emericella nidulans (strain FGSC A4 / ATCC 38163 / CBS 112.46 / NRRL 194 / M139) (Aspergillus nidulans)).